We begin with the raw amino-acid sequence, 711 residues long: Receptor-like protein 43 (711 aa).

An N-terminal signal peptide occupies residues 1–30 (MKGFWNSKSTIRITLSFIFLFISQFSDVLA). At 31-666 (APTRHLCRPE…EDEEVISWIA (636 aa)) the chain is on the extracellular side. N-linked (GlcNAc...) asparagine glycosylation is found at Asn-78, Asn-114, Asn-143, Asn-167, and Asn-191. LRR repeat units lie at residues 120 to 143 (LHFLTTLDLSFNDFKGQIMSSIEN), 144 to 168 (LSHLTYLDLSFNHFSGQVPSSIGNL), 170 to 192 (HLTFLDLYCNQFSGQVPSSIGNL), 193 to 216 (SHLTTLELSFNRFFGQFPSSIGGL), 218 to 240 (HLTTLNLFVNNFLGQIPSSIGNL), 241 to 266 (SNLTSLYLCKNNFSGQIPSFIGNLSQ), 268 to 288 (TRLDLSSNNFFGEIPGWLWTL), and 289 to 316 (PNLFYVNLSYNTFIGFQRPNKPEPSMGH). N-linked (GlcNAc...) asparagine glycans are attached at residues Asn-239, Asn-242, Asn-252, and Asn-263. 5 N-linked (GlcNAc...) asparagine glycosylation sites follow: Asn-295, Asn-323, Asn-347, Asn-362, and Asn-372. The LRR 9; degenerate repeat unit spans residues 317-334 (LLGSNNNFTGKIPSFICE). LRR repeat units lie at residues 335–358 (LRSLETLDLSDNNFSGLIPRCMGN), 360–384 (KSNLSHLNLRQNNLSGGLPKHIFEI), 386–406 (RSLDVGHNQLVGKLPRSLRFF), 407–430 (STLEVLNVESNRINDTFPFWLTSL), 431–452 (PKLQVLVLRSNAFHGPIHEASF), 453–476 (LKLRIIDISHNHFNGTLPSDYFVK), 519–543 (LTIYTALDFSGNKFEGEIPKSIGLL), 544–567 (KELLVLNLSNNAFTGHIPSSMGKL), 568–591 (TALESLDVSQNKLYGEIPQEIGNL), and 593–616 (FLSCMNFSHNQLAGLVPGGQQFLT). A glycan (N-linked (GlcNAc...) asparagine) is linked at Asn-420. Asn-466 is a glycosylation site (N-linked (GlcNAc...) asparagine). N-linked (GlcNAc...) asparagine glycans are attached at residues Asn-550, Asn-590, and Asn-598. Residues 667-687 (AAIGFIPGIVLGLTIGYILVF) form a helical membrane-spanning segment. The Cytoplasmic portion of the chain corresponds to 688-711 (YKPEWFIKTFGRNNCRRRSTTTTH).

It belongs to the RLP family.

Its subcellular location is the cell membrane. This is Receptor-like protein 43 from Arabidopsis thaliana (Mouse-ear cress).